The chain runs to 1860 residues: Golgi-specific brefeldin A-resistance guanine nucleotide exchange factor 1 (1860 aa).

The tract at residues 1–211 is DCB; DCB:DCB domain and DCB:HUS domain interaction; it reads MVDKNIYIIQ…EPKNYVGTNM (211 aa). The interaction with RAB1B stretch occupies residues 1–381; sequence MVDKNIYIIQ…SVHDMDYVNP (381 aa). 2 disordered regions span residues 215–266 and 281–372; these read KMRA…GGMP and AASA…DSAS. Residues 227–241 show a composition bias toward basic residues; the sequence is WKKQKRSPRPPRHMT. Composition is skewed to polar residues over residues 250–262, 290–301, and 335–351; these read PTPN…SNLT, TDSGLEFSSQTT, and DLQQ…SASV. 2 positions are modified to phosphoserine: S350 and S353. T508 bears the Phosphothreonine mark. Residues 531–551 are HUS; DCB:HUS domain interaction; it reads RIPSFVTELYINYDCDYYCSN. The span at 620–631 shows a compositional bias: basic and acidic residues; the sequence is TREASNTERTAS. A disordered region spans residues 620 to 666; that stretch reads TREASNTERTASDGKAVGMASDIPGLHLPGGGRLPPEHGKSGCSDLE. S663 carries the post-translational modification Phosphoserine. The region spanning 693-883 is the SEC7 domain; the sequence is ELIEIKNKKK…EDMYHAIKNE (191 aa). Residues 887 to 1371 form a phosphatidylinositol-phosphate binding; required for translocation to the leading edge and for ARF1 activation upon GPCR signaling region; the sequence is MPEEQTGLVR…PSRPGPSPLI (485 aa). Residues 1285–1297 are compositionally biased toward low complexity; sequence QATARADAPDAGA. Residues 1285-1336 form a disordered region; that stretch reads QATARADAPDAGAQSDSELPSYHQNDVSLDRGYTSDSEVYTDHGRPGKIHRS. Residues 1298 to 1311 are compositionally biased toward polar residues; sequence QSDSELPSYHQNDV. At S1299 the chain carries Phosphoserine. Residue Y1317 is modified to Phosphotyrosine. A phosphoserine mark is found at S1319, S1321, and S1336. At T1338 the chain carries Phosphothreonine; by AMPK. Disordered stretches follow at residues 1351–1371, 1431–1484, and 1726–1809; these read GKDD…SPLI, CKSQ…DEGV, and PMPM…QPPL. Positions 1433–1447 are enriched in basic and acidic residues; it reads SQEKRGKSHKYDSKG. Over residues 1465-1474 the composition is skewed to polar residues; sequence TSSQHASRGG. A phosphoserine mark is found at S1476, S1774, and S1785. Low complexity predominate over residues 1775–1792; that stretch reads PRAASSSSPGSPVASSPS.

As to quaternary structure, can form homodimers and probably homotetramers. Interacts with COPG1; the interaction is independent of ARF1 activation. Interacts with ARF1, ARF3, ARF4 and ARF5. Interacts with RAB1B (GTP-bound form); required for GBF1 membrane association. Interacts with GGA1, GGA2 and GGA3. Interacts with USO1. Interacts (via SEC7 domain) with PNPLA2 (via C-terminus); the interaction is direct. Interacts with ARMH3. (Microbial infection) Interacts with poliovirus protein 3A. AMPK-mediated phosphorylation at Thr-1338 is induced by 2-deoxyglucose (2-DG) and AICA ribonucleotide, and occurs during mitosis leading to membrane disassociation and inactivation of ARF1 during mitosis. In terms of tissue distribution, ubiquitous.

It localises to the golgi apparatus. The protein localises to the cis-Golgi network. The protein resides in the endoplasmic reticulum-Golgi intermediate compartment. It is found in the trans-Golgi network. Its subcellular location is the cytoplasm. It localises to the lipid droplet. The protein localises to the membrane. With respect to regulation, inhibited by brefeldin A (BFA). Inhibited by golgicide A (GCA). Functionally, guanine-nucleotide exchange factor (GEF) for members of the Arf family of small GTPases involved in trafficking in the early secretory pathway; its GEF activity initiates the coating of nascent vesicles via the localized generation of activated ARFs through replacement of GDP with GTP. Recruitment to cis-Golgi membranes requires membrane association of Arf-GDP and can be regulated by ARF1, ARF3, ARF4 and ARF5. Involved in the recruitment of the COPI coat complex to the endoplasmic reticulum exit sites (ERES), and the endoplasmic reticulum-Golgi intermediate (ERGIC) and cis-Golgi compartments which implicates ARF1 activation. Involved in COPI vesicle-dependent retrograde transport from the ERGIC and cis-Golgi compartments to the endoplasmic reticulum (ER). Involved in the trans-Golgi network recruitment of GGA1, GGA2, GGA3, BIG1, BIG2, and the AP-1 adaptor protein complex related to chlathrin-dependent transport; the function requires its GEF activity (probably at least in part on ARF4 and ARF5). Has GEF activity towards ARF1. Has in vitro GEF activity towards ARF5. Involved in the processing of PSAP. Required for the assembly of the Golgi apparatus. The AMPK-phosphorylated form is involved in Golgi disassembly during mitotis and under stress conditions. May be involved in the COPI vesicle-dependent recruitment of PNPLA2 to lipid droplets; however, this function is under debate. In neutrophils, involved in G protein-coupled receptor (GPCR)-mediated chemotaxis und superoxide production. Proposed to be recruited by phosphatidylinositol-phosphates generated upon GPCR stimulation to the leading edge where it recruits and activates ARF1, and is involved in recruitment of GIT2 and the NADPH oxidase complex. Plays a role in maintaining mitochondrial morphology. The sequence is that of Golgi-specific brefeldin A-resistance guanine nucleotide exchange factor 1 (GBF1) from Homo sapiens (Human).